We begin with the raw amino-acid sequence, 66 residues long: Large ribosomal subunit protein bL35 (66 aa).

It belongs to the bacterial ribosomal protein bL35 family.

The polypeptide is Large ribosomal subunit protein bL35 (Acholeplasma laidlawii (strain PG-8A)).